We begin with the raw amino-acid sequence, 257 residues long: 2,3,4,5-tetrahydropyridine-2,6-dicarboxylate N-acetyltransferase (257 aa).

The protein belongs to the transferase hexapeptide repeat family. DapH subfamily.

It catalyses the reaction (S)-2,3,4,5-tetrahydrodipicolinate + acetyl-CoA + H2O = L-2-acetamido-6-oxoheptanedioate + CoA. It participates in amino-acid biosynthesis; L-lysine biosynthesis via DAP pathway; LL-2,6-diaminopimelate from (S)-tetrahydrodipicolinate (acetylase route): step 1/3. Functionally, catalyzes the transfer of an acetyl group from acetyl-CoA to tetrahydrodipicolinate. The sequence is that of 2,3,4,5-tetrahydropyridine-2,6-dicarboxylate N-acetyltransferase from Lactococcus lactis subsp. cremoris (strain SK11).